The chain runs to 552 residues: MAFQDLLDQVGSLGRFQILQTAFFCICILIAYPHMLLENFTAAVPGHRCWVHILDNDTVSANGTEILSQETLLRISIPLDSNLRPEKCRRFIHPQWQFLDLNGTFPNMSEPDTEPCVDGWVYDRSSFSSTIVTEWDLVCESQSLISVAQSLFMVAQLLGGLIFGHISDRFGRKIIFRCCLLLFAISGTCAAIAPTFPVYCSLRFLGGICLMNIITNAVSTMSEWTGPKSIALMTGIILNSCNIGQILMGGLGFVIQDWRTLQLTMSIPLFILFLFSRSVLESAQWLIITNQLDEALKELRRAAHINGKKDTGETLTIEFVKSTMKQELDEGQTNVSLFDLLRPPKLRVRIFYLSFVRFAATIPFLGLMLNLQHFGSNIFLFQIIFGAVTFIVRCAVLLTMNHVGRRISQMVSSFLVGIPILVNIFLSQEMQTLRVALATLGIGATTAIFTTHTVHHNELVPTVLRSIAIGLNAMFSRLGATLAPLLMILTVYSPDLPWIIYGVSSILAGLVVLLLPETRNQPLPNTIQDVENNRRDSRKTKQEDISMKVTQF.

A run of 12 helical transmembrane segments spans residues 16–36 (FQIL…PHML), 144–164 (LISV…LIFG), 178–198 (CCLL…TFPV), 204–224 (FLGG…MSEW), 235–255 (GIIL…GFVI), 267–287 (IPLF…QWLI), 350–370 (IFYL…LMLN), 378–398 (IFLF…AVLL), 407–427 (ISQM…IFLS), 435–455 (VALA…HTVH), 469–489 (IGLN…LMIL), and 496–516 (LPWI…LLLP). Residues 524-552 (PNTIQDVENNRRDSRKTKQEDISMKVTQF) form a disordered region. A compositionally biased stretch (basic and acidic residues) spans 531 to 546 (ENNRRDSRKTKQEDIS).

Belongs to the major facilitator (TC 2.A.1) superfamily. Organic cation transporter (TC 2.A.1.19) family.

The protein resides in the cell membrane. It carries out the reaction estrone 3-sulfate(out) + glutarate(in) = estrone 3-sulfate(in) + glutarate(out). The enzyme catalyses 17beta-estradiol 17-O-(beta-D-glucuronate)(out) + glutarate(in) = 17beta-estradiol 17-O-(beta-D-glucuronate)(in) + glutarate(out). The catalysed reaction is taurocholate(out) + glutarate(in) = taurocholate(in) + glutarate(out). It catalyses the reaction glycocholate(out) + glutarate(in) = glycocholate(in) + glutarate(out). It carries out the reaction dehydroepiandrosterone 3-sulfate(out) + glutarate(in) = dehydroepiandrosterone 3-sulfate(in) + glutarate(out). The enzyme catalyses glutarate(in) + succinate(out) = glutarate(out) + succinate(in). Functionally, renal transmembrane organic anion/dicarboxylate exchanger that participates in the reabsorption of conjugated steroids, as well as bile acids, driven by an outward gradient of dicarboxylates such as glutarate or succinate. Transports taurocholate, estrone 3-sulfate, and estradiol-17-glucuronide (17beta-estradiol 17-O-(beta-D-glucuronate)), but not androstanediol glucuronide (5alpha-androstane-3alpha,17beta-diol 3-O-(beta-D-glucuronate)). The sequence is that of Steroid transmembrane transporter SLC22A24 from Equus caballus (Horse).